The chain runs to 243 residues: MSEFQVPEIPAQFLPKHIALVMDGNGRWATERGMKRTEGHKRGEAVLLDVVDACIELGVPYLSAYAFSTENWRRSTDEVRFLMGFNRDVLRRQRDDLHEKGVRVRWVGRRPRLWRSVIRELETAEELTKDNTTMTLAMCVNYGGRAEIIDAARDIARLAAEGKLRPEQITEKTFPNFLDEPDMPDVDLFLRPSGEKRTSNFLLWQSAYAEMVYQDKLFPDFTQQDLYDAVLEYAKRDRRFGSA.

Asp-23 is a catalytic residue. A Mg(2+)-binding site is contributed by Asp-23. Residues 24–27 (GNGR), Trp-28, Arg-36, His-40, and 68–70 (STE) each bind substrate. The active-site Proton acceptor is the Asn-71. Residues Trp-72, Arg-74, Arg-191, and 197-199 (RTS) each bind substrate. Glu-210 is a binding site for Mg(2+).

The protein belongs to the UPP synthase family. Homodimer. Requires Mg(2+) as cofactor.

Its function is as follows. Catalyzes the condensation of isopentenyl diphosphate (IPP) with allylic pyrophosphates generating different type of terpenoids. The polypeptide is Isoprenyl transferase 2 (Corynebacterium glutamicum (strain ATCC 13032 / DSM 20300 / JCM 1318 / BCRC 11384 / CCUG 27702 / LMG 3730 / NBRC 12168 / NCIMB 10025 / NRRL B-2784 / 534)).